A 362-amino-acid polypeptide reads, in one-letter code: MGFAARPFHIVFSLFVLAGATQALIICPFDSIYQFGDSISDTGNYIRILPNGPAAAAANFPYGITFPGIPTGRFSDGRLIVDFIARVLGLPLLNPYLQQNASFKNGVNFAVGGATALNSSVLAAAGVQIPDIYLIPLSTQLNWFQTYLRSNCSSPTECSKKVQNSLFLIGNIGNNDVNYALPYRTIQEIEAYVPSIAKAVANATREIIRLGGRRIIVPGTFPFGCLPRNLYLFPNGDKDDLGCLRRLNDLSIYFNNLFQQALNSLRIEFPQAVIIYADYYNAFRFLLRNARALGFTSTLQSCCGIGGPYNFDLNRLCGFPGVPVCRNPREYIQWDGFHYTEAAHRHIVQYLIPDILKELKCS.

Residues 1–23 (MGFAARPFHIVFSLFVLAGATQA) form the signal peptide. Residue serine 38 is the Nucleophile of the active site. Asparagine 100, asparagine 118, asparagine 151, and asparagine 202 each carry an N-linked (GlcNAc...) asparagine glycan. Residues aspartate 335 and histidine 338 contribute to the active site.

This sequence belongs to the 'GDSL' lipolytic enzyme family. As to expression, confined to roots.

It catalyses the reaction 17-O-acetylnorajmaline + H2O = norajmaline + acetate + H(+). The enzyme catalyses 17-O-acetylajmaline + H2O = ajmaline + acetate + H(+). The protein operates within alkaloid biosynthesis; ajmaline biosynthesis. Its function is as follows. Acetylesterase involved in the biosynthesis of ajmaline-type monoterpenoid indole alkaloids (MIAs) natural products, important plant-derived pharmaceuticals used in the therapy of heart disorders. Deacetylates 17-O-acetylnorajmaline to produce norajmaline. May also catalyze the conversion of 17-O-acetylajmaline to ajmaline. The polypeptide is Acetylajmalan esterase 2 (Rauvolfia serpentina (Serpentine wood)).